Reading from the N-terminus, the 109-residue chain is Large ribosomal subunit protein bL31B (109 aa).

The interval 79 to 109 (NVRQPAQQPQPEEDALPAAKGKKKVVTKKKK) is disordered. Basic residues predominate over residues 98–109 (KGKKKVVTKKKK).

It belongs to the bacterial ribosomal protein bL31 family. Type B subfamily. Part of the 50S ribosomal subunit.

The protein is Large ribosomal subunit protein bL31B of Chlamydia pneumoniae (Chlamydophila pneumoniae).